The chain runs to 594 residues: Solute carrier family 22 member 14 (594 aa).

The Cytoplasmic segment spans residues 1–70 (MAGEENFKEE…EFGTFQQRLV (70 aa)). A helical transmembrane segment spans residues 71-91 (ALTFIPSIMSAFFMFADHFVF). Residues 92–184 (TAQKPYCNTS…LVCGMETKKD (93 aa)) lie on the Extracellular side of the membrane. 4 N-linked (GlcNAc...) asparagine glycosylation sites follow: Asn-99, Asn-117, Asn-125, and Asn-150. A helical transmembrane segment spans residues 185–205 (TAQIMFMAGLPIGSLIFRLIT). The Cytoplasmic segment spans residues 206–210 (DKMGR). A helical transmembrane segment spans residues 211 to 231 (YPAILLSLLGLIIFGFGTAFM). Over 232 to 235 (NSFH) the chain is Extracellular. The helical transmembrane segment at 236-256 (LYLFFRFGISQSVVGYAISSI) threads the bilayer. Topologically, residues 257 to 270 (SLATEWLVGEHRAH) are cytoplasmic. Residues 271-291 (AIILGHCFFAVGAVLLTGIAY) form a helical membrane-spanning segment. Residues 292–297 (SLPHWQ) are Extracellular-facing. A helical transmembrane segment spans residues 298 to 318 (LLFLVGGILVIPFISYIWILP). Topologically, residues 319 to 379 (ESPRWLMMKG…DFCKNRQLCK (61 aa)) are cytoplasmic. The helical transmembrane segment at 380–400 (VTLVMSCVWFTVSYTYFTLSL) threads the bilayer. Topologically, residues 401–408 (RMRELGVS) are extracellular. The chain crosses the membrane as a helical span at residues 409 to 431 (VHFRHVVPSIMEVPARLCCIFLL). The Cytoplasmic segment spans residues 432–437 (QQIGRK). The chain crosses the membrane as a helical span at residues 438 to 458 (WSLAVTLLQAIIWCLLLLFLP). The Extracellular portion of the chain corresponds to 459-488 (EGEDGLRLKWPRCPATELKSMTILVLMLRE). A helical transmembrane segment spans residues 489 to 509 (FSLAATVTVFFLYTAELLPTV). Over 510–512 (LRA) the chain is Cytoplasmic. Residues 513-533 (TGLGLVSLASVAGAILSLTII) traverse the membrane as a helical segment. Residues 534–538 (SQTPS) are Extracellular-facing. Residues 539–559 (LLPIFLCCVLAIVAFSLSSLL) form a helical membrane-spanning segment. The Cytoplasmic segment spans residues 560-594 (PETRDQPLSESLNHSSQIRNKVKDMKTKETSSDDV). The disordered stretch occupies residues 566–594 (PLSESLNHSSQIRNKVKDMKTKETSSDDV). Over residues 567-578 (LSESLNHSSQIR) the composition is skewed to polar residues. Residues 580–594 (KVKDMKTKETSSDDV) are compositionally biased toward basic and acidic residues.

Belongs to the major facilitator (TC 2.A.1) superfamily. Organic cation transporter (TC 2.A.1.19) family. As to expression, ubiquitous.

It localises to the mitochondrion inner membrane. The protein localises to the cell projection. It is found in the cilium. Its subcellular location is the flagellum membrane. The catalysed reaction is riboflavin(in) = riboflavin(out). Functionally, riboflavin transporter localized at the inner mitochondrial membrane of the spermatozoa midpiece, which is required for male fertility. SLC22A14-mediated riboflavin transport is essential for spermatozoa energy generation and motility: riboflavin is the precursor of FMN and FAD, which are coenzymes of many enzymes in the TCA cycle (the citric acid cycle) in mitochondria. Required for sperm motility and normal sperm flagellar structure. This Homo sapiens (Human) protein is Solute carrier family 22 member 14.